The primary structure comprises 540 residues: Zinc finger CCCH domain-containing protein 46 (540 aa).

The C3H1-type zinc finger occupies Gly148–Gly175. The 77-residue stretch at Arg258–Lys334 folds into the RRM domain. Basic and acidic residues-rich tracts occupy residues Val337–Leu351 and Glu436–Gly450. Disordered stretches follow at residues Val337–Gly365, Glu436–Ser469, and Ser490–Ser514. A Phosphoserine modification is found at Ser451. Residues Ser490–Ser511 show a composition bias toward low complexity.

Its function is as follows. Possesses RNA-binding and ribonuclease activities in vitro. The polypeptide is Zinc finger CCCH domain-containing protein 46 (Arabidopsis thaliana (Mouse-ear cress)).